The primary structure comprises 475 residues: ATP synthase subunit beta, chloroplastic (475 aa).

Residue 155 to 162 participates in ATP binding; the sequence is GGAGVGKT.

Belongs to the ATPase alpha/beta chains family. As to quaternary structure, F-type ATPases have 2 components, CF(1) - the catalytic core - and CF(0) - the membrane proton channel. CF(1) has five subunits: alpha(3), beta(3), gamma(1), delta(1), epsilon(1). CF(0) has four main subunits: a(1), b(1), b'(1) and c(9-12).

It localises to the plastid. Its subcellular location is the chloroplast thylakoid membrane. The catalysed reaction is ATP + H2O + 4 H(+)(in) = ADP + phosphate + 5 H(+)(out). Its function is as follows. Produces ATP from ADP in the presence of a proton gradient across the membrane. The catalytic sites are hosted primarily by the beta subunits. This Porphyra purpurea (Red seaweed) protein is ATP synthase subunit beta, chloroplastic.